The chain runs to 164 residues: Ribosome maturation factor RimM (164 aa).

Positions 90–161 (KGSYFIADLI…TVTIKPLEIW (72 aa)) constitute a PRC barrel domain.

The protein belongs to the RimM family. In terms of assembly, binds ribosomal protein uS19.

The protein resides in the cytoplasm. Functionally, an accessory protein needed during the final step in the assembly of 30S ribosomal subunit, possibly for assembly of the head region. Essential for efficient processing of 16S rRNA. May be needed both before and after RbfA during the maturation of 16S rRNA. It has affinity for free ribosomal 30S subunits but not for 70S ribosomes. The protein is Ribosome maturation factor RimM of Clostridium botulinum (strain ATCC 19397 / Type A).